Reading from the N-terminus, the 329-residue chain is MSVLEESRPFAQQLFNVYFTILSLFCFKLFVKISLAILSHFYIVKGNRKEAARIAAEFYGVTQGQGSWADRSPLHEAASQGRLLALRTLLSQGYNVNAVTIDHITPLHEACLGDHVACARTLLEAGANVNAITIDGVTPLFNACSQGSTSCTELLLEYGAKAQLESCLPSPTHEAASKGHHEFLDLLISWGIDVDQDIPHLGTPLYVACMSQQFHCIWKLLYAGADVQKGKYWDTPLHAAAQQSSTEIVNLLIEFGADINAKNTELLRPVDVATTSSMVERILLQHEATPSSLCQLCRLCIRNYIGRPRLHLIPQLQLPTLLQNFLQYR.

ANK repeat units follow at residues 69-98 (ADRSPLHEAASQGRLLALRTLLSQGYNVNA), 102-131 (DHITPLHEACLGDHVACARTLLEAGANVNA), 135-164 (DGVTPLFNACSQGSTSCTELLLEYGAKAQL), 167-196 (CLPSPTHEAASKGHHEFLDLLISWGIDVDQ), 200-229 (HLGTPLYVACMSQQFHCIWKLLYAGADVQK), and 232-261 (YWDTPLHAAAQQSSTEIVNLLIEFGADINA). The 52-residue stretch at 278 to 329 (MVERILLQHEATPSSLCQLCRLCIRNYIGRPRLHLIPQLQLPTLLQNFLQYR) folds into the SOCS box domain.

The protein belongs to the ankyrin SOCS box (ASB) family. Expressed in endothelial and smooth muscle cells of collateral arteries as well as in satellite cells.

The protein operates within protein modification; protein ubiquitination. In terms of biological role, may be a substrate-recognition component of a SCF-like ECS (Elongin-Cullin-SOCS-box protein) E3 ubiquitin-protein ligase complex which mediates the ubiquitination and subsequent proteasomal degradation of target proteins. May play a role in the initiation of arteriogenesis. The protein is Ankyrin repeat and SOCS box protein 5 (ASB5) of Oryctolagus cuniculus (Rabbit).